We begin with the raw amino-acid sequence, 176 residues long: MGFLERIKKLFSKEEEKQEESILSNPLERLKKGDIIEIDGETWEVTDVALYDYGASKEKEWEIRSASRRGFLSLEEGKIYFFEEIDPEELEPDPGEHFRKYGKPPEYVTYKGKRYRLKYAGKAKYIKNLESYPVTIWEFRSEDGEMIDLEIWDEYEIEAYKGRELQEWEIESILPR.

This is an uncharacterized protein from Aquifex aeolicus (strain VF5).